A 321-amino-acid polypeptide reads, in one-letter code: Replication factor C small subunit (321 aa).

An ATP-binding site is contributed by 46–53 (GPAGVGKT).

Belongs to the activator 1 small subunits family. RfcS subfamily. As to quaternary structure, heterohexamer composed of four small subunits (RfcS) and two large subunits (RfcL).

Its function is as follows. Part of the RFC clamp loader complex which loads the PCNA sliding clamp onto DNA. The complex possesses DNA-dependent ATPase activity which is further stimulated by PCNA. In conjunction with PCNA stimulates DNA synthesis by PolB, relieving inhibition by replication protein A (RPA). This is Replication factor C small subunit (rfcS) from Methanothermobacter thermautotrophicus (strain ATCC 29096 / DSM 1053 / JCM 10044 / NBRC 100330 / Delta H) (Methanobacterium thermoautotrophicum).